A 497-amino-acid polypeptide reads, in one-letter code: Serine/threonine-protein phosphatase 2A 56 kDa regulatory subunit beta isoform (497 aa).

Over residues 1 to 19 (METKLPPASTPTSPSSPGL) the composition is skewed to low complexity. Disordered regions lie at residues 1–55 (METK…YQSN) and 475–497 (TQGA…GGQS). Residues S32, S35, S44, S46, S47, and S48 each carry the phosphoserine; by CLK2 modification. Residues 34 to 45 (RSLRRARPRRSH) show a composition bias toward basic residues.

This sequence belongs to the phosphatase 2A regulatory subunit B56 family. In terms of assembly, component of the serine/threonine-protein phosphatase 2A complex (PP2A). This complex consists of a common heterodimeric core enzyme, composed of a 36 kDa catalytic subunit (subunit C) and a 65 kDa constant scaffold subunit (PR65 or subunit A), that associates with a variety of regulatory subunits. Proteins that associate with the core dimer include three families of regulatory subunits B (the R2/B/PR55/B55, R3/B''/PR72/PR130/PR59 and R5/B'/B56 families), the 48 kDa variable regulatory subunit, viral proteins, and cell signaling molecules. Interacts with SGO1. Interacts with AKT1. Interacts with CUL3 and KLHL15; this interaction leads to proteasomal degradation. In terms of processing, ubiquitinated by E3 CUL3-KLHL15 complex; this modification leads to proteasomal degradation. As to expression, highest expression in brain.

The protein resides in the cytoplasm. As the regulatory component of the serine/threonine-protein phosphatase 2A (PP2A) holoenzyme, modulates substrate specificity, subcellular localization, and responsiveness to phosphorylation. The phosphorylated form mediates the interaction between PP2A and AKT1, leading to AKT1 dephosphorylation. This Homo sapiens (Human) protein is Serine/threonine-protein phosphatase 2A 56 kDa regulatory subunit beta isoform (PPP2R5B).